The chain runs to 114 residues: uncharacterized protein (114 aa).

Residues 2 to 97 (ESEPLYKLKA…VARKVLARVL (96 aa)) enclose the HTH arsR-type domain. A DNA-binding region (H-T-H motif) is located at residues 37–60 (GELLSSDVGLESSNLSQQLGVLRR).

This is an uncharacterized protein from Mycobacterium tuberculosis (strain CDC 1551 / Oshkosh).